The sequence spans 966 residues: Polycystin-2 (966 aa).

The segment at 1 to 106 is disordered; it reads MVNSRRVQPQ…DDDEVEGEEG (106 aa). Residues 1–217 are Cytoplasmic-facing; that stretch reads MVNSRRVQPQ…NANREKYLKS (217 aa). A compositionally biased stretch (gly residues) spans 30–44; the sequence is VAGGAGLAVPGGLGE. Over residues 46–56 the composition is skewed to basic and acidic residues; it reads RGLEIEMERIR. Low complexity predominate over residues 58–79; that stretch reads AAARDPPAGASASPSPPLSSCS. Serine 72 and serine 76 each carry phosphoserine. Acidic residues predominate over residues 91 to 105; it reads EAEEDDDDDEVEGEE. Residue arginine 135 is modified to Omega-N-methylarginine. The disordered stretch occupies residues 147–179; sequence HLSGRRRRLEDQGAQCPSPAGGGDPLHRHLPLE. Residues 218 to 239 traverse the membrane as a helical segment; sequence VLRELVTYLFFLVVLCILTYGM. Residues 240–466 are Extracellular-facing; it reads MSSNVYYYTR…PVKLIRYVTA (227 aa). Residues asparagine 297, asparagine 303, and asparagine 326 are each glycosylated (N-linked (GlcNAc...) asparagine). Cysteine 329 and cysteine 342 are joined by a disulfide. Asparagine 360 and asparagine 373 each carry an N-linked (GlcNAc...) asparagine glycan. The helical transmembrane segment at 467–487 threads the bilayer; it reads FDFFLAACEIIFCFFIIYYVV. Over 488–503 the chain is Cytoplasmic; sequence EEILEIRIHRLSYFRS. A helical membrane pass occupies residues 504 to 524; sequence FWNCLDVVIVVLSVVAMVINI. The Extracellular segment spans residues 525–550; that stretch reads YRMSNAEGLLQFLEDQNSFPNFEHVA. A helical transmembrane segment spans residues 551 to 571; the sequence is YWQIQFNNISAVMVFLVWIKL. Glutamine 555 provides a ligand contact to cholesterol. Residues 572–595 lie on the Cytoplasmic side of the membrane; that stretch reads FKFINFNRTMSQLSTTMSRCAKDL. A helical membrane pass occupies residues 596 to 617; it reads FGFTIMFSIIFLAYAQLAYLVF. The Extracellular portion of the chain corresponds to 618 to 629; it reads GTQVDDFSTFQE. Residues 630 to 644 constitute an intramembrane region (pore-forming); the sequence is CIFTQFRIILGDINF. Position 639 (leucine 639) interacts with Ca(2+). The Selectivity filter signature appears at 639–641; sequence LGD. Residues 645–652 are Extracellular-facing; that stretch reads AEIEEANR. A helical transmembrane segment spans residues 653–673; that stretch reads VLGPLYFTTFVFFMFFILLNM. Over 674 to 966 the chain is Cytoplasmic; the sequence is FLAIINDSYS…GGNGSANVHA (293 aa). The region spanning 748 to 783 is the EF-hand domain; sequence HTDAEIEAIFTKYDQDGDQELTEREHQQMRDDLEKE. Ca(2+)-binding residues include aspartate 761, aspartate 763, aspartate 765, glutamate 767, and glutamate 772. Residues 764-828 are disordered; that stretch reads GDQELTEREH…GHSSRRRGSI (65 aa). Positions 768–793 are enriched in basic and acidic residues; it reads LTEREHQQMRDDLEKEREDLDLEHSS. The span at 794-805 shows a compositional bias: low complexity; it reads LPRPMSSRSFPR. Serine 799, serine 806, serine 810, and serine 827 each carry phosphoserine. The segment at 801–820 is linker; that stretch reads RSFPRSLDDSEEEDDEDSGH. The tract at residues 808 to 819 is important for interaction with PACS1 and PACS2; it reads DDSEEEDDEDSG. A coiled-coil region spans residues 831–870; sequence GVSYEEFQVLVRRVDRMEHSIGSIVSKIDAVIVKLEIMER. The disordered stretch occupies residues 914-966; sequence WESDDAASQTGHGVSTQVGLGGQPHPRNPRPPSSQSAEGLEGGGGNGSANVHA. A compositionally biased stretch (polar residues) spans 919 to 931; that stretch reads AASQTGHGVSTQV.

The protein belongs to the polycystin family. In terms of assembly, homotetramer. Component of the heterotetrameric polycystin channel complex with PKD1; the tetramer contains one PKD1 chain and three PKD2 chains. Interaction with PKD1 is required for ciliary localization. Isoform 1 interacts with PKD1 while isoform 3 does not. Interacts with PKD1L1. Interacts with CD2AP. Interacts with HAX1. Interacts with NEK8. Part of a complex containing AKAP5, ADCY5, ADCY6 and PDE4C. Interacts (via C-terminus) with TRPV4 (via C-terminus). Interacts (via C-terminal acidic region) with PACS1 and PACS2; these interactions retain the protein in the endoplasmic reticulum and prevent trafficking to the cell membrane. Interacts with TMEM33; enhancing its opening at the ER membrane. Interacts with TMEM120A; TMEM120A inhibits PKD2 channel activity through the physical association of PKD2 with TMEM120A. Interacts (via N-terminus) with RYR2; regulates RYR2 channel activity. Post-translationally, N-glycosylated. The four subunits in a tetramer probably differ in the extent of glycosylation; simultaneous glycosylation of all experimentally validated sites would probably create steric hindrance. In terms of processing, sumoylated by SUMO1; sumoylation regulates PKD2 membrane recycling and is necessary for intravascular pressure-induced arterial contractility. Phosphorylated. Phosphorylation is important for protein function; a mutant that lacks the N-terminal phosphorylation sites cannot complement a zebrafish pkd2-deficient mutant. PKD-mediated phosphorylation at the C-terminus regulates its function in the release of Ca(2+) stores from the endoplasmic reticulum. Phosphorylation at Ser-810 regulates PKD2 trafficking. Phosphorylation at Ser-72 is required for PKD2 trafficking to or retention at the lateral plasma membrane. Phosphorylation at Ser-799, Ser-810 and Ser-827 regulates PKD2 channel activity. In terms of tissue distribution, detected in kidney epithelium (at protein level). Highly expressed on basolateral membranes in distal convoluted tubules and medullary thick ascending limbs of Henle. Detected at much lower levels in cortical and medullary collecting tubules, and not detected in the glomerular tuft, in thin limbs of Henle, interstitium and blood vessels (at protein level). Expressed in mesenchymally derived structures in the developing embryo at day 12.5. Isoform 1 is predominantly expressed in kidney at all developmental stages with high levels also detected in lung. Isoform 3 shows highest expression in brain with lower expression in kidney and lung, low levels in thymus and is hardly detectable in liver.

It localises to the cell projection. Its subcellular location is the cilium membrane. It is found in the cell membrane. The protein localises to the basolateral cell membrane. The protein resides in the cytoplasmic vesicle membrane. It localises to the endoplasmic reticulum membrane. Its subcellular location is the golgi apparatus. It is found in the vesicle. The protein localises to the secreted. The protein resides in the extracellular exosome. The enzyme catalyses K(+)(in) = K(+)(out). It catalyses the reaction Na(+)(in) = Na(+)(out). It carries out the reaction Ca(2+)(in) = Ca(2+)(out). Its activity is regulated as follows. Channel activity is regulated by phosphorylation. The channel is activated by increased cytoplasmic Ca(2+) (in the uM range) and by membrane depolarization. TMEM120A inhibits the channel activity of PKD2, and mediates mechanosensitivity of the PKD2-TMEM120A channel complex. At the endoplasmic reticulum membrane (ER), TMEM33 enhances its channel activity. PKD1/ PKD2 complex on the plasma membrane is activated by PKD1 N-terminus. In terms of biological role, forms a nonselective cation channel. Can function as a homotetrameric ion channel or can form heteromer with PKD1. Displays distinct function depending on its subcellular localization and regulation by its binding partners. Functions as a cation channel, with a preference for monovalent cations over divalent cations that allows K(+), Na(+) and Ca(2+) influx, with low selectivity for Ca(2+). Involved in fluid-flow mechanosensation by the primary cilium in renal epithelium. In the endoplasmic reticulum, likely functions as a K(+) channel to facilitate Ca(2+) release. The heterotetrameric PKD1/PKD2 channel has higher Ca(2+) permeability than homomeric PKD2 channel and acts as a primarily Ca(2+)-permeable channel. PKD1 and PKD2 may function through a common signaling pathway that is necessary to maintain the normal, differentiated state of renal tubule cells. Interacts with and acts as a regulator of a number of other channels, such as TRPV4, TRPC1, IP3R, RYR2, ultimately further affecting intracellular signaling, to modulate intracellular Ca(2+) signaling. Together with TRPV4, forms mechano- and thermosensitive channels in cilium. In cardiomyocytes, PKD2 modulates Ca(2+) release from stimulated RYR2 receptors through direct association. Also involved in left-right axis specification via its role in sensing nodal flow; forms a complex with PKD1L1 in cilia to facilitate flow detection in left-right patterning. Acts as a regulator of cilium length together with PKD1. Mediates systemic blood pressure and contributes to the myogenic response in cerebral arteries though vasoconstriction. The sequence is that of Polycystin-2 from Mus musculus (Mouse).